We begin with the raw amino-acid sequence, 102 residues long: Small ribosomal subunit protein uS10m (102 aa).

This sequence belongs to the universal ribosomal protein uS10 family.

It localises to the mitochondrion. This is Small ribosomal subunit protein uS10m (RPS10) from Marchantia polymorpha (Common liverwort).